The primary structure comprises 162 residues: UPF0114 protein PSPA7_5214 (162 aa).

Transmembrane regions (helical) follow at residues 15–35, 53–73, and 136–156; these read LLAP…IKFF, LILV…LVMV, and LMWY…MGYL.

Belongs to the UPF0114 family.

It is found in the cell membrane. The polypeptide is UPF0114 protein PSPA7_5214 (Pseudomonas paraeruginosa (strain DSM 24068 / PA7) (Pseudomonas aeruginosa (strain PA7))).